A 108-amino-acid polypeptide reads, in one-letter code: Thioredoxin (108 aa).

One can recognise a Thioredoxin domain in the interval 2 to 108 (GKYFEATDKN…IAKKIDEHIG (107 aa)). A disulfide bond links C32 and C35.

The protein belongs to the thioredoxin family.

Functionally, participates in various redox reactions through the reversible oxidation of its active center dithiol to a disulfide and catalyzes dithiol-disulfide exchange reactions. The chain is Thioredoxin (trxA) from Chlorobaculum thiosulfatiphilum (Chlorobium limicola f.sp. thiosulfatophilum).